The sequence spans 174 residues: Ribosome rescue factor SmrB (174 aa).

The region spanning 96–171 is the Smr domain; the sequence is LDLHGLTQQQ…GDAAILVLIE (76 aa).

It belongs to the SmrB family. In terms of assembly, associates with collided ribosomes, but not with correctly translating polysomes.

Acts as a ribosome collision sensor. Detects stalled/collided disomes (pairs of ribosomes where the leading ribosome is stalled and a second ribosome has collided with it) and endonucleolytically cleaves mRNA at the 5' boundary of the stalled ribosome. Stalled/collided disomes form a new interface (primarily via the 30S subunits) that binds SmrB. Cleaved mRNA becomes available for tmRNA ligation, leading to ribosomal subunit dissociation and rescue of stalled ribosomes. This chain is Ribosome rescue factor SmrB, found in Tolumonas auensis (strain DSM 9187 / NBRC 110442 / TA 4).